Reading from the N-terminus, the 1435-residue chain is Cardiac-enriched FHL2-interacting protein (1435 aa).

Disordered regions lie at residues glutamate 109–phenylalanine 176, serine 203–serine 234, phenylalanine 250–leucine 270, and lysine 291–leucine 311. The residue at position 120 (threonine 120) is a Phosphothreonine. Positions leucine 133–isoleucine 147 are enriched in polar residues. Positions serine 149–serine 160 are enriched in basic and acidic residues. The residue at position 323 (serine 323) is a Phosphoserine. Disordered stretches follow at residues glutamate 362 to serine 592, alanine 609 to asparagine 772, serine 795 to serine 847, proline 1007 to threonine 1108, serine 1138 to proline 1261, and glutamine 1363 to serine 1435. Basic and acidic residues predominate over residues lysine 389–threonine 402. Serine 470 bears the Phosphoserine mark. 4 stretches are compositionally biased toward basic and acidic residues: residues glutamine 479–lysine 493, valine 522–glutamine 535, alanine 609–glutamate 620, and cysteine 650–glutamine 667. Residues leucine 668 to glutamate 679 are compositionally biased toward polar residues. Residues lysine 727 to aspartate 741 are compositionally biased toward low complexity. Basic and acidic residues predominate over residues asparagine 751–asparagine 772. At serine 816 the chain carries Phosphoserine. Residues lysine 831–serine 847 show a composition bias toward polar residues. A compositionally biased stretch (low complexity) spans asparagine 1055–serine 1066. A compositionally biased stretch (polar residues) spans alanine 1067–alanine 1082. Residues proline 1083–proline 1093 show a composition bias toward low complexity. Positions asparagine 1094 to alanine 1105 are enriched in polar residues. A compositionally biased stretch (basic residues) spans arginine 1182–lysine 1193. A compositionally biased stretch (basic and acidic residues) spans threonine 1194–proline 1211. Acidic residues predominate over residues aspartate 1424–serine 1435.

As to quaternary structure, interacts with FHL2. As to expression, expressed in the heart and skeletal muscle.

Its subcellular location is the cytoplasm. It is found in the myofibril. The protein localises to the sarcomere. The protein resides in the z line. In terms of biological role, plays an important role in cardiomyocyte hypertrophy via activation of the calcineurin/NFAT signaling pathway. The sequence is that of Cardiac-enriched FHL2-interacting protein from Homo sapiens (Human).